The primary structure comprises 381 residues: 3-hydroxyisobutyryl-CoA hydrolase, mitochondrial (381 aa).

The transit peptide at 1–25 directs the protein to the mitochondrion; sequence MDRLLTISNHIGKNIRQFSTSTEEV. 4 residues coordinate substrate: E116, G141, E164, and D172.

Belongs to the enoyl-CoA hydratase/isomerase family.

Its subcellular location is the mitochondrion. It catalyses the reaction 3-hydroxy-2-methylpropanoyl-CoA + H2O = 3-hydroxy-2-methylpropanoate + CoA + H(+). The protein operates within amino-acid degradation; L-valine degradation. Its function is as follows. Hydrolyzes 3-hydroxyisobutyryl-CoA (HIBYL-CoA), a saline catabolite. The polypeptide is 3-hydroxyisobutyryl-CoA hydrolase, mitochondrial (hibch) (Dictyostelium discoideum (Social amoeba)).